Consider the following 194-residue polypeptide: UPF0215 protein DR_A0167 (194 aa).

It belongs to the UPF0215 family.

This Deinococcus radiodurans (strain ATCC 13939 / DSM 20539 / JCM 16871 / CCUG 27074 / LMG 4051 / NBRC 15346 / NCIMB 9279 / VKM B-1422 / R1) protein is UPF0215 protein DR_A0167.